The chain runs to 420 residues: Zinc finger and BTB domain-containing protein 42 (420 aa).

Residues 24 to 92 form the BTB domain; that stretch reads CDCTVLVGDA…MYEGRLDLHS (69 aa). Disordered stretches follow at residues 174 to 204 and 216 to 248; these read PPSWQVSEESSGALDLSLKPGPRPEQAHPPC and QGAQPLVKAEQDSFSEQDSSSPQSADRSPPPVC. A compositionally biased stretch (low complexity) spans 227-241; it reads DSFSEQDSSSPQSAD. C2H2-type zinc fingers lie at residues 292-314, 332-354, 360-382, and 388-411; these read CICPLCCKLFPSTHALQPHLSAH, PTCPLCSKTFSCTYTLKRHERTH, YTCVQCGKSFQYSHNLSRHAVVH, and HACRWCERRFTQSGDLYRHVRKFH.

It belongs to the krueppel C2H2-type zinc-finger protein family. ZBTB18 subfamily.

It localises to the cytoplasm. It is found in the nucleus. The protein resides in the nucleoplasm. Transcriptional repressor. Specifically binds DNA and probably acts by recruiting chromatin remodeling multiprotein complexes. In Rattus norvegicus (Rat), this protein is Zinc finger and BTB domain-containing protein 42 (Zbtb42).